A 289-amino-acid chain; its full sequence is Acetyl-coenzyme A carboxylase carboxyl transferase subunit beta 2 (289 aa).

The 265-residue stretch at 25-289 folds into the CoA carboxyltransferase N-terminal domain; sequence VWTKCPSCDQ…TNTSIRLEVK (265 aa). Cys29, Cys32, Cys48, and Cys51 together coordinate Zn(2+). The C4-type zinc-finger motif lies at 29 to 51; the sequence is CPSCDQVLYRIALKENLEVCPKC.

The protein belongs to the AccD/PCCB family. Acetyl-CoA carboxylase is a heterohexamer composed of biotin carboxyl carrier protein (AccB), biotin carboxylase (AccC) and two subunits each of ACCase subunit alpha (AccA) and ACCase subunit beta (AccD). Requires Zn(2+) as cofactor.

Its subcellular location is the cytoplasm. The catalysed reaction is N(6)-carboxybiotinyl-L-lysyl-[protein] + acetyl-CoA = N(6)-biotinyl-L-lysyl-[protein] + malonyl-CoA. The protein operates within lipid metabolism; malonyl-CoA biosynthesis; malonyl-CoA from acetyl-CoA: step 1/1. Functionally, component of the acetyl coenzyme A carboxylase (ACC) complex. Biotin carboxylase (BC) catalyzes the carboxylation of biotin on its carrier protein (BCCP) and then the CO(2) group is transferred by the transcarboxylase to acetyl-CoA to form malonyl-CoA. In Vibrio parahaemolyticus serotype O3:K6 (strain RIMD 2210633), this protein is Acetyl-coenzyme A carboxylase carboxyl transferase subunit beta 2.